The chain runs to 171 residues: ATP synthase subunit b (171 aa).

A helical membrane pass occupies residues 12 to 34 (FALNLNLFETNVINLAVVAFGLY).

The protein belongs to the ATPase B chain family. F-type ATPases have 2 components, F(1) - the catalytic core - and F(0) - the membrane proton channel. F(1) has five subunits: alpha(3), beta(3), gamma(1), delta(1), epsilon(1). F(0) has four main subunits: a(1), b(1), b'(1) and c(10-14). The alpha and beta chains form an alternating ring which encloses part of the gamma chain. F(1) is attached to F(0) by a central stalk formed by the gamma and epsilon chains, while a peripheral stalk is formed by the delta, b and b' chains.

The protein localises to the cellular thylakoid membrane. Its function is as follows. F(1)F(0) ATP synthase produces ATP from ADP in the presence of a proton or sodium gradient. F-type ATPases consist of two structural domains, F(1) containing the extramembraneous catalytic core and F(0) containing the membrane proton channel, linked together by a central stalk and a peripheral stalk. During catalysis, ATP synthesis in the catalytic domain of F(1) is coupled via a rotary mechanism of the central stalk subunits to proton translocation. Functionally, component of the F(0) channel, it forms part of the peripheral stalk, linking F(1) to F(0). The protein is ATP synthase subunit b of Prochlorococcus marinus (strain SARG / CCMP1375 / SS120).